We begin with the raw amino-acid sequence, 737 residues long: MESQETAKRPIEPNGAVAAQDAEPATKRVKLDDAPVPQIQEEPSQPQPQPQPQPQTEDEKPTEQRQDDRDKRRGIAPIKKEYLVVPPSQVAKTAEVVDDDAAEGRTAPGAEGAAGKDGKKKRPKGQNKEREFGIFADAQRLCNSVAWTPEFSPRHCKHGERCNALHDIRKYLKEGRRPDLNVFGGKCPVWETHGKCSSGWRCLFVESHMKEIEHEDGRKELVLTEDPTKIKPEAAPLVPPEEESMDARAGVYNVVAPAVKLALSRKKIQHEKSDQYLKWMAKDSELARIHYHKQKDDDDVAKDYAAQYVEPPLKPSEKRRIYFGRETPVLAPLTTQGNLPFRRLCVELGAEITYSEMALGLPLLQGQKADWTLMRAHESEITPPRYTPTGIVDPAYDNSKDLKFGVQITAHAPWIAIKSAETLARYLPHLRVIDLNCGCPIDMVYKSGAGSALLDAPSKLERMIRGMNTVSGEVPVTAKIRMGVRDNHLTAQKLVERLALGAPDIRAVSGAPGCAAVTLHGRTRQQRYTKAADWSYIAECAALVKSFNEKADSLQDTIREADERSLPNGGRMYFVGNGDCYSHVDYFNHVDNAKVDSVMVGRGAIIKPWIFEEISAGQYLDKSATERLAYVEKFAKYGMEAWGSDELGLNYTRRFLLEFLSFFHRYVPIGLLEYLPPAMNDRPPAYKGRNELETLLASKNYLDWIKISEMFLGPAPPNFKFQPKHKSNAYENIEAEG.

Composition is skewed to basic and acidic residues over residues 1–11 (MESQETAKRPI) and 24–33 (PATKRVKLDD). The tract at residues 1–127 (MESQETAKRP…GKKKRPKGQN (127 aa)) is disordered. Over residues 35–44 (PVPQIQEEPS) the composition is skewed to low complexity. Residues 57 to 82 (EDEKPTEQRQDDRDKRRGIAPIKKEY) are compositionally biased toward basic and acidic residues. 2 consecutive C3H1-type zinc fingers follow at residues 142-166 (CNSVAWTPEFSPRHCKHGERCNALH) and 187-208 (CPVWETHGKCSSGWRCLFVESH). FMN contacts are provided by residues 332–334 (PLT) and Q407. Catalysis depends on C439, which acts as the Proton donor. FMN-binding positions include K479, H520, 577 to 579 (NGD), and 601 to 602 (GR).

Belongs to the Dus family. Dus3 subfamily. FMN is required as a cofactor.

It is found in the cytoplasm. Its subcellular location is the nucleus. It carries out the reaction 5,6-dihydrouridine(47) in tRNA + NAD(+) = uridine(47) in tRNA + NADH + H(+). The enzyme catalyses 5,6-dihydrouridine(47) in tRNA + NADP(+) = uridine(47) in tRNA + NADPH + H(+). The catalysed reaction is a 5,6-dihydrouridine in mRNA + NAD(+) = a uridine in mRNA + NADH + H(+). It catalyses the reaction a 5,6-dihydrouridine in mRNA + NADP(+) = a uridine in mRNA + NADPH + H(+). Functionally, catalyzes the synthesis of dihydrouridine, a modified base found in the D-loop of most tRNAs. Specifically modifies U47 in cytoplasmic tRNAs. Catalyzes the synthesis of dihydrouridine in some mRNAs, thereby affecting their translation. In Neurospora crassa (strain ATCC 24698 / 74-OR23-1A / CBS 708.71 / DSM 1257 / FGSC 987), this protein is tRNA-dihydrouridine(47) synthase [NAD(P)(+)] (dus-3).